The chain runs to 265 residues: Mlc titration factor A (265 aa).

Zn(2+) is bound by residues His111, His148, His152, and Glu211.

The protein belongs to the MtfA family. In terms of assembly, interacts with Mlc. Zn(2+) serves as cofactor.

The protein resides in the cytoplasm. In terms of biological role, involved in the modulation of the activity of the glucose-phosphotransferase system (glucose-PTS). Interacts with the transcriptional repressor Mlc, preventing its interaction with DNA and leading to the modulation of expression of genes regulated by Mlc, including ptsG, which encodes the PTS system glucose-specific EIICB component. Its function is as follows. Shows zinc-dependent metallopeptidase activity. The sequence is that of Mlc titration factor A from Salmonella enteritidis PT4 (strain P125109).